Consider the following 507-residue polypeptide: Proton-coupled zinc antiporter SLC30A1 (507 aa).

Residues 1–10 (MGCWGRNRGR) are Cytoplasmic-facing. The helical transmembrane segment at 11–31 (LLCMLALTFMFMVLEVVVSRV) threads the bilayer. The Extracellular portion of the chain corresponds to 32-35 (TSSL). A helical transmembrane segment spans residues 36–56 (AMLSDSFHMLSDVLALVVALV). His43 and Asp47 together coordinate Zn(2+). Residues 57–78 (AERFARRTHATQKNTFGWIRAE) are Cytoplasmic-facing. Residues 79-99 (VMGALVNAIFLTGLCFAILLE) traverse the membrane as a helical segment. At 100-113 (AIERFIEPHEMQQP) the chain is on the extracellular side. The chain crosses the membrane as a helical span at residues 114–134 (LVVLGVGVAGLLVNVLGLCLF). At 135-248 (HHHSGFSQDS…RAGQLNMRGV (114 aa)) the chain is on the cytoplasmic side. The interval 142-217 (QDSGHGHSHG…DPENPRSGDT (76 aa)) is disordered. Positions 146–158 (HGHSHGGHGHGHG) are 6 X 2 AA approximate repeats of H-G. Basic residues predominate over residues 147 to 167 (GHSHGGHGHGHGLPKGPRVKS). Over residues 189–201 (TNTLVANTSNSNG) the composition is skewed to polar residues. The helical transmembrane segment at 249–269 (FLHVLGDALGSVIVVVNALVF) threads the bilayer. Residues His251 and Asp255 each contribute to the Zn(2+) site. Residues 270–308 (YFSWKGCSEGDFCVNPCFPDPCKAFVEIINSTHASVYEA) are Extracellular-facing. Asn299 is a glycosylation site (N-linked (GlcNAc...) asparagine). The helical transmembrane segment at 309-329 (GPCWVLYLDPTLCVVMVCILL) threads the bilayer. Residues 330 to 507 (YTTYPLLKES…MPNKQPESSL (178 aa)) are Cytoplasmic-facing. A Phosphoserine modification is found at Ser506.

It belongs to the cation diffusion facilitator (CDF) transporter (TC 2.A.4) family. SLC30A subfamily. In terms of assembly, homodimer. Interacts with TMEM163. Interacts and forms a complex with TMC6 and TMC8; the interaction regulates zinc transport into the ER. As to quaternary structure, (Microbial infection) Interacts with human papillomavirus 16/HPV16 protein E5; the interaction alleviates SLC30A1-mediated transcription factors inhibition. N-glycosylated at Asn-299. N-glycosylation promotes endocytosis and degradation through the proteasomal or lysosomal pathways.

Its subcellular location is the cell membrane. It localises to the basolateral cell membrane. The protein resides in the cytoplasmic vesicle membrane. The protein localises to the cytoplasm. It is found in the endoplasmic reticulum membrane. Its subcellular location is the golgi apparatus membrane. It localises to the nucleus membrane. It carries out the reaction Zn(2+)(in) + 2 H(+)(out) = Zn(2+)(out) + 2 H(+)(in). Functionally, zinc ion:proton antiporter that could function at the plasma membrane mediating zinc efflux from cells against its electrochemical gradient protecting them from intracellular zinc accumulation and toxicity. Alternatively, could prevent the transport to the plasma membrane of CACNB2, the L-type calcium channels regulatory subunit, through a yet to be defined mechanism. By modulating the expression of these channels at the plasma membrane, could prevent calcium and zinc influx into cells. By the same mechanism, could also prevent L-type calcium channels-mediated heavy metal influx into cells. In some cells, could also function as a zinc ion:proton antiporter mediating zinc entry into the lumen of cytoplasmic vesicles. In macrophages, can increase zinc ions concentration into the lumen of cytoplasmic vesicles containing engulfed bacteria and could help inactivate them. Forms a complex with TMC6/EVER1 and TMC8/EVER2 at the ER membrane of keratynocytes which facilitates zinc uptake into the ER. Down-regulates the activity of transcription factors induced by zinc and cytokines. The polypeptide is Proton-coupled zinc antiporter SLC30A1 (Homo sapiens (Human)).